The following is a 570-amino-acid chain: Urease subunit alpha (570 aa).

Positions 132 to 570 (GGIDTHVHFI…LPMAQRYFLF (439 aa)) constitute a Urease domain. Positions 137 and 139 each coordinate Ni(2+). His-139 and Ala-170 together coordinate substrate. Ni(2+) is bound at residue Lys-220. At Lys-220 the chain carries N6-carboxylysine. Substrate is bound by residues His-222 and His-249. The Ni(2+) site is built by His-249 and His-275. His-323 functions as the Proton donor in the catalytic mechanism. Position 363 (Asp-363) interacts with Ni(2+). Ala-366 provides a ligand contact to substrate.

This sequence belongs to the metallo-dependent hydrolases superfamily. Urease alpha subunit family. As to quaternary structure, heterotrimer of UreA (gamma), UreB (beta) and UreC (alpha) subunits. Three heterotrimers associate to form the active enzyme. Requires Ni cation as cofactor. Carboxylation allows a single lysine to coordinate two nickel ions.

It localises to the cytoplasm. The catalysed reaction is urea + 2 H2O + H(+) = hydrogencarbonate + 2 NH4(+). It participates in nitrogen metabolism; urea degradation; CO(2) and NH(3) from urea (urease route): step 1/1. With respect to regulation, inhibited by fluoride. The polypeptide is Urease subunit alpha (Sporosarcina pasteurii (Bacillus pasteurii)).